A 212-amino-acid chain; its full sequence is Troponin I, cardiac muscle (212 aa).

Polar residues predominate over residues 1–11 (MADRSGGSTAG). Positions 1-45 (MADRSGGSTAGDTVPAPPPVRRRSSANYRAYATEPHAKKKSKISA) are disordered. Position 2 is an N-acetylalanine (Ala2). Phosphoserine is present on Ser5. Phosphoserine; by PKA and PKD/PRKD1 is present on residues Ser24 and Ser25. A Phosphotyrosine modification is found at Tyr28. A Phosphothreonine; by STK4/MST1 modification is found at Thr33. The interval 34–81 (EPHAKKKSKISASRKLQLKTLMLQIAKQELEREAEERRGEKGRALSTR) is involved in binding TNC. Ser44 and Ser46 each carry phosphoserine; by PKC/PRKCE. Thr53 bears the Phosphothreonine; by STK4/MST1 mark. Ser79 is modified (phosphoserine). Residue Thr80 is modified to Phosphothreonine. Residues 131–151 (NQKIFDLRGKFKRPTLRRVRI) are involved in binding TNC and actin. Phosphothreonine; by STK4/MST1 is present on Thr145. Phosphoserine; by PAK3 is present on Ser152. Thr183 bears the Phosphothreonine mark. Ser201 is modified (phosphoserine).

This sequence belongs to the troponin I family. As to quaternary structure, interacts with TRIM63. Binds to actin and tropomyosin. Interacts with STK4/MST1. Post-translationally, phosphorylated at Ser-24 and Ser-25 by PRKD1; phosphorylation reduces myofilament calcium sensitivity. Phosphorylated preferentially at Thr-33. Phosphorylation by STK4/MST1 alters its binding affinity to TNNC1 (cardiac Tn-C) and TNNT2 (cardiac Tn-T). Phosphorylated at Ser-44 and Ser-46 by PRKCE; phosphorylation increases myocardium contractile dysfunction.

Troponin I is the inhibitory subunit of troponin, the thin filament regulatory complex which confers calcium-sensitivity to striated muscle actomyosin ATPase activity. This Bos taurus (Bovine) protein is Troponin I, cardiac muscle (TNNI3).